Here is a 528-residue protein sequence, read N- to C-terminus: Negative elongation factor A (528 aa).

The HDAg domain maps to 89–248 (WVLMVADILK…TPIPPSRTLL (160 aa)). The interval 125–188 (REKVGECEAS…LQKSTETAQQ (64 aa)) is NELF-C/D-binding. Threonine 157 carries the post-translational modification Phosphothreonine. The segment at 189 to 248 (LKRSAGVPFHAKGRGLLRKMDTTTPLKGIPKQAPFRSPTAPSVFSPTGNRTPIPPSRTLL) is RNAPII-binding. The disordered stretch occupies residues 215–245 (KGIPKQAPFRSPTAPSVFSPTGNRTPIPPSR). 2 positions are modified to phosphoserine: serine 225 and serine 233. Polar residues predominate over residues 227 to 238 (TAPSVFSPTGNR). The residue at position 277 (threonine 277) is a Phosphothreonine. The span at 320–341 (PSTSYLPSTPSVVPASSYIPSS) shows a compositional bias: low complexity. Positions 320 to 409 (PSTSYLPSTP…PPAVAPTTQT (90 aa)) are disordered. Serine 363 bears the Phosphoserine mark.

The protein belongs to the NELF-A family. The NELF complex is composed of NELFA, NELFB, NELFCD (isoform NELF-C or isoform NELF-D) and NELFE; NELFA and NELFCD form a stable subcomplex that binds to the N-terminus of NELFB. In vitro, the NELFA:NELFCD subcomplex binds to ssDNA and ssRNA in a sequence- and structure-dependent manner. Interacts with the RNA polymerase II complex when it is not phosphorylated by P-TEFb. As to expression, ubiquitous. Expressed in heart, brain, placenta, liver, skeletal muscle, kidney and pancreas. Expressed at lower level in adult lung. Expressed in fetal brain, lung, liver and kidney.

Its subcellular location is the nucleus. Its function is as follows. Essential component of the NELF complex, a complex that negatively regulates the elongation of transcription by RNA polymerase II. The NELF complex, which acts via an association with the DSIF complex and causes transcriptional pausing, is counteracted by the P-TEFb kinase complex. In terms of biological role, (Microbial infection) The NELF complex is involved in HIV-1 latency possibly involving recruitment of PCF11 to paused RNA polymerase II. The protein is Negative elongation factor A (NELFA) of Homo sapiens (Human).